The primary structure comprises 416 residues: tRNA(Met) cytidine acetate ligase (416 aa).

Residues 7–20 (VVEY…HLHH), Gly101, Asn162, and 187–188 (RI) contribute to the ATP site.

Belongs to the TmcAL family.

It is found in the cytoplasm. The enzyme catalyses cytidine(34) in elongator tRNA(Met) + acetate + ATP = N(4)-acetylcytidine(34) in elongator tRNA(Met) + AMP + diphosphate. Functionally, catalyzes the formation of N(4)-acetylcytidine (ac(4)C) at the wobble position of elongator tRNA(Met), using acetate and ATP as substrates. First activates an acetate ion to form acetyladenylate (Ac-AMP) and then transfers the acetyl group to tRNA to form ac(4)C34. The protein is tRNA(Met) cytidine acetate ligase of Halalkalibacterium halodurans (strain ATCC BAA-125 / DSM 18197 / FERM 7344 / JCM 9153 / C-125) (Bacillus halodurans).